The following is a 197-amino-acid chain: Small ribosomal subunit protein uS7 (197 aa).

It belongs to the universal ribosomal protein uS7 family.

The sequence is that of Small ribosomal subunit protein uS7 (RPS5) from Cicer arietinum (Chickpea).